Reading from the N-terminus, the 406-residue chain is Autotransporter heptosyltransferase TibC (406 aa).

ADP-D-glycero-beta-D-manno-heptose contacts are provided by T107, L108, and G109. D110 functions as the Proton acceptor in the catalytic mechanism. Positions 224, 226, 230, 257, 281, 302, and 326 each coordinate ADP-D-glycero-beta-D-manno-heptose. C339, C342, C358, and C370 together coordinate Fe(3+).

This sequence belongs to the glycosyltransferase 9 family. Homododecamer composed of 6 homodimers forming a ring. The cofactor is Fe(3+).

The enzyme catalyses ADP-D-glycero-beta-D-manno-heptose + L-seryl-[protein] = O-(D-glycero-alpha-D-manno-heptosyl)-L-seryl-[protein] + ADP + H(+). In terms of biological role, glycosylates adhesin TibA. Specifically adds anomer D-glycero-beta-D-manno-heptose. Cannot use ADP-L-glycero-beta-D-manno-heptose as a sugar donor. The sequence is that of Autotransporter heptosyltransferase TibC from Escherichia coli O78:H11 (strain H10407 / ETEC).